We begin with the raw amino-acid sequence, 377 residues long: uncharacterized protein (377 aa).

Helical transmembrane passes span 23-43 (LKFI…FIAY) and 251-271 (GSFI…SISY).

It localises to the cell membrane. This is an uncharacterized protein from Methanocaldococcus jannaschii (strain ATCC 43067 / DSM 2661 / JAL-1 / JCM 10045 / NBRC 100440) (Methanococcus jannaschii).